Reading from the N-terminus, the 154-residue chain is MTQDYKLQVEAIKCGTVIDHIPAQIGFKLLSLFKLTATDQRITIGLNLPSKRSGRKDLIKIENTFLTEQQANQLAMYAPDATVNRIDNYEVVKKLTLSLPERIDAVLTCPNSNCISHNEPVDSSFTVKAQRGEISLKCKYCEKEFDHLAVLHAD.

The Zn(2+) site is built by C109, C114, C138, and C141.

This sequence belongs to the PyrI family. Contains catalytic and regulatory chains. It depends on Zn(2+) as a cofactor.

Involved in allosteric regulation of aspartate carbamoyltransferase. This Yersinia pseudotuberculosis serotype O:1b (strain IP 31758) protein is Aspartate carbamoyltransferase regulatory chain.